Consider the following 864-residue polypeptide: Translation initiation factor IF-2 (864 aa).

The segment at 1–252 is disordered; the sequence is MEDKNKTIKE…KTSSDKRDFS (252 aa). A compositionally biased stretch (basic and acidic residues) spans 78-90; it reads KEVKYEESSRKQD. The span at 106 to 120 shows a compositional bias: polar residues; that stretch reads VRPSGDSSYPVSRSP. Residues 150–212 show a composition bias toward gly residues; it reads RGPGQGGGYQ…PGNRSGGPGG (63 aa). The span at 239 to 252 shows a compositional bias: basic and acidic residues; that stretch reads HDKEKTSSDKRDFS. Residues 359–528 form the tr-type G domain; that stretch reads NRPPVVTIMG…LLQAEVMDLK (170 aa). Positions 368 to 375 are G1; sequence GHVDHGKT. A GTP-binding site is contributed by 368–375; the sequence is GHVDHGKT. Residues 393–397 form a G2 region; sequence GITQH. Residues 414–417 form a G3 region; it reads DTPG. GTP is bound by residues 414–418 and 468–471; these read DTPGH and NKID. The tract at residues 468 to 471 is G4; the sequence is NKID. The interval 504–506 is G5; that stretch reads SAR.

The protein belongs to the TRAFAC class translation factor GTPase superfamily. Classic translation factor GTPase family. IF-2 subfamily.

Its subcellular location is the cytoplasm. Functionally, one of the essential components for the initiation of protein synthesis. Protects formylmethionyl-tRNA from spontaneous hydrolysis and promotes its binding to the 30S ribosomal subunits. Also involved in the hydrolysis of GTP during the formation of the 70S ribosomal complex. The sequence is that of Translation initiation factor IF-2 from Leptospira borgpetersenii serovar Hardjo-bovis (strain L550).